We begin with the raw amino-acid sequence, 238 residues long: Adapter protein MecA (238 aa).

The segment at 108-133 (EDENEESVQGNQQQRRSHASDHSKRA) is disordered.

The protein belongs to the MecA family. As to quaternary structure, homodimer.

Enables the recognition and targeting of unfolded and aggregated proteins to the ClpC protease or to other proteins involved in proteolysis. The protein is Adapter protein MecA of Staphylococcus carnosus (strain TM300).